The chain runs to 425 residues: MSRNQQLFEQSQKFIPGGVNSPVRAFKSVGGTPVFFRKGEGAYAWDADDKSYIDYVGSWGPLILGHAHPEVVDAVYAAAKNGLTFGAPTEAELEIAELLCRLVPSIEQVRLVSSGTEATMSAIRLARGYTARNRIIKFEGCYHGHDDALLVKAGSGALTFGHPSSAGVPVETASSTVVLDYNDLAGVEQAFNQFGAEIAAVIVEPVAGNMNLIAPQPGFLAGLRELCTRHGSVLIFDEVMTGFRVGLECAQGLYGIKPDLTTLGKVIGGGMPMAAFGGRREIMQCLAPVGAVYQAGTLSGNPVAVAAGLATLKLVQVPGFYDKLAARTRKLTEGLAAAAAKQGVVFCAEAVGGMFGLYFRESAPKSYAEVMSCDREAFNGFFHAMLEEGIYFAPSAFEAGFVSAAHGDAEISKTLATAEKIFARE.

Lysine 265 carries the post-translational modification N6-(pyridoxal phosphate)lysine.

It belongs to the class-III pyridoxal-phosphate-dependent aminotransferase family. HemL subfamily. As to quaternary structure, homodimer. Requires pyridoxal 5'-phosphate as cofactor.

It localises to the cytoplasm. The catalysed reaction is (S)-4-amino-5-oxopentanoate = 5-aminolevulinate. It functions in the pathway porphyrin-containing compound metabolism; protoporphyrin-IX biosynthesis; 5-aminolevulinate from L-glutamyl-tRNA(Glu): step 2/2. The chain is Glutamate-1-semialdehyde 2,1-aminomutase from Nitrosospira multiformis (strain ATCC 25196 / NCIMB 11849 / C 71).